A 577-amino-acid chain; its full sequence is Arginine--tRNA ligase (577 aa).

The short motif at 122 to 132 is the 'HIGH' region element; sequence PNVAKEMHVGH.

This sequence belongs to the class-I aminoacyl-tRNA synthetase family. As to quaternary structure, monomer.

It is found in the cytoplasm. The catalysed reaction is tRNA(Arg) + L-arginine + ATP = L-arginyl-tRNA(Arg) + AMP + diphosphate. This Escherichia fergusonii (strain ATCC 35469 / DSM 13698 / CCUG 18766 / IAM 14443 / JCM 21226 / LMG 7866 / NBRC 102419 / NCTC 12128 / CDC 0568-73) protein is Arginine--tRNA ligase.